The sequence spans 80 residues: Consomatin Mrc1 (80 aa).

A signal peptide spans Met-1 to Gly-22. The propeptide occupies Gly-23–Arg-57. Residues Cys-63 and Cys-68 are joined by a disulfide bond. Trp-65 carries the D-tryptophan modification. 4 positions are modified to 4-hydroxyproline: Pro-69, Pro-70, Pro-71, and Pro-72. Residues Arg-74–Gly-80 constitute a propeptide that is removed on maturation.

Belongs to the conotoxin C superfamily. Consomatin family. In terms of tissue distribution, expressed by the venom duct.

The protein resides in the secreted. Functionally, moderately activates human somatostatin receptors (SSTR) with a preferential activation of SSTR1 and SSTR4. In vivo, does not cause behavioral changes in mice within a few minutes of intracranial injection, but causes a progressive loss of movement thereafter. Four to five hours after injection, mice recover, even with the highest dose tested. Shows antinociception and antihyperalgesia activities in two mouse models of acute pain, most probably by acting outside the central nervous system. The protein is Consomatin Mrc1 of Conus mercator (Trader cone).